Here is a 203-residue protein sequence, read N- to C-terminus: Large ribosomal subunit protein bL25 (203 aa).

Belongs to the bacterial ribosomal protein bL25 family. CTC subfamily. In terms of assembly, part of the 50S ribosomal subunit; part of the 5S rRNA/L5/L18/L25 subcomplex. Contacts the 5S rRNA. Binds to the 5S rRNA independently of L5 and L18.

In terms of biological role, this is one of the proteins that binds to the 5S RNA in the ribosome where it forms part of the central protuberance. The polypeptide is Large ribosomal subunit protein bL25 (Wolbachia pipientis subsp. Culex pipiens (strain wPip)).